The sequence spans 157 residues: NADPH-dependent 7-cyano-7-deazaguanine reductase (157 aa).

Residue Cys-55 is the Thioimide intermediate of the active site. Asp-62 serves as the catalytic Proton donor. Residues 77–79 and 96–97 contribute to the substrate site; these read VES and HE.

Belongs to the GTP cyclohydrolase I family. QueF type 1 subfamily.

It localises to the cytoplasm. It carries out the reaction 7-aminomethyl-7-carbaguanine + 2 NADP(+) = 7-cyano-7-deazaguanine + 2 NADPH + 3 H(+). It participates in tRNA modification; tRNA-queuosine biosynthesis. Its function is as follows. Catalyzes the NADPH-dependent reduction of 7-cyano-7-deazaguanine (preQ0) to 7-aminomethyl-7-deazaguanine (preQ1). The polypeptide is NADPH-dependent 7-cyano-7-deazaguanine reductase (Neisseria meningitidis serogroup C / serotype 2a (strain ATCC 700532 / DSM 15464 / FAM18)).